The chain runs to 407 residues: Argininosuccinate synthase (407 aa).

Residues 16 to 24 (AYSGGLDTS) and alanine 44 each bind ATP. L-citrulline-binding residues include tyrosine 96 and serine 101. Glycine 126 is a binding site for ATP. Residues threonine 128, asparagine 132, and aspartate 133 each contribute to the L-aspartate site. Residue asparagine 132 participates in L-citrulline binding. L-citrulline-binding residues include arginine 136, serine 185, serine 194, glutamate 270, and tyrosine 282.

This sequence belongs to the argininosuccinate synthase family. Type 1 subfamily. In terms of assembly, homotetramer.

The protein localises to the cytoplasm. It carries out the reaction L-citrulline + L-aspartate + ATP = 2-(N(omega)-L-arginino)succinate + AMP + diphosphate + H(+). The protein operates within amino-acid biosynthesis; L-arginine biosynthesis; L-arginine from L-ornithine and carbamoyl phosphate: step 2/3. The chain is Argininosuccinate synthase from Shewanella sediminis (strain HAW-EB3).